The sequence spans 191 residues: Holliday junction branch migration complex subunit RuvA (191 aa).

Residues 1 to 64 (MIRGVRGTLV…EDELALYGFA (64 aa)) form a domain I region. Residues 65 to 136 (TEAELELFLS…ELRGRLPALT (72 aa)) are domain II. Residues 136 to 139 (TEVQ) are flexible linker. Residues 140–191 (AGEPIDQELVAALQALGYTAQEARQAATHPEVRRAPSLEERIVAALRQLAPP) form a domain III region.

It belongs to the RuvA family. Homotetramer. Forms an RuvA(8)-RuvB(12)-Holliday junction (HJ) complex. HJ DNA is sandwiched between 2 RuvA tetramers; dsDNA enters through RuvA and exits via RuvB. An RuvB hexamer assembles on each DNA strand where it exits the tetramer. Each RuvB hexamer is contacted by two RuvA subunits (via domain III) on 2 adjacent RuvB subunits; this complex drives branch migration. In the full resolvosome a probable DNA-RuvA(4)-RuvB(12)-RuvC(2) complex forms which resolves the HJ.

The protein localises to the cytoplasm. In terms of biological role, the RuvA-RuvB-RuvC complex processes Holliday junction (HJ) DNA during genetic recombination and DNA repair, while the RuvA-RuvB complex plays an important role in the rescue of blocked DNA replication forks via replication fork reversal (RFR). RuvA specifically binds to HJ cruciform DNA, conferring on it an open structure. The RuvB hexamer acts as an ATP-dependent pump, pulling dsDNA into and through the RuvAB complex. HJ branch migration allows RuvC to scan DNA until it finds its consensus sequence, where it cleaves and resolves the cruciform DNA. The polypeptide is Holliday junction branch migration complex subunit RuvA (Thermomicrobium roseum (strain ATCC 27502 / DSM 5159 / P-2)).